The primary structure comprises 387 residues: Alanine racemase (387 aa).

K38 acts as the Proton acceptor; specific for D-alanine in catalysis. K38 carries the post-translational modification N6-(pyridoxal phosphate)lysine. R136 contributes to the substrate binding site. Y267 acts as the Proton acceptor; specific for L-alanine in catalysis. M315 contacts substrate.

This sequence belongs to the alanine racemase family. Requires pyridoxal 5'-phosphate as cofactor.

The enzyme catalyses L-alanine = D-alanine. It functions in the pathway amino-acid biosynthesis; D-alanine biosynthesis; D-alanine from L-alanine: step 1/1. Functionally, catalyzes the interconversion of L-alanine and D-alanine. May also act on other amino acids. This Clostridium novyi (strain NT) protein is Alanine racemase (alr).